We begin with the raw amino-acid sequence, 572 residues long: MSMIGTKSFFISSSPKVPVGISWGPSSYRTNSSLSVRSPTLTCSISTISQPTRKEPATTKPEIMEELHEGTRKELLTSSSPIATMKLIDSIQRLGVGYYFEEEINTLLDRFLDLETTEDLLATALRFRLLRDNCFPAHSDVFGKFMNKDGKFKESLRKDVWGLLSLYEASYLGTKDEVELVEAMEFTKTCLEEQSIPLMAHKLSRHVSQALDLPRHLRMPRLEARNYIHEYSLESNNSPPLLELAKLEFNAVQSLHQKELIEIVRWWKQLGLVDKLGFARDRPLECYLWTVGIFPEPYNSTCRIELTKTIAILLVIDDIFDTYGSLPDLILFTEAVRRWDLNAMESLPEYMKICYMALYNTTNDIGFMILKRHGLSIVPHLKRTWIDMFEAFLTEAKWFNSGYVPTLEEYLDNGVTTGGTYMALVHSFFLMGQGVNKETVTMMEPYPDLFSLSGRILRLWDDLGTAREEQERGDVACSIECLMREKRISCDDEGRKQVRQLIRSLWTELNGELIAPSAMPLSIINASLNLARTAQVVYQHGDDKKGSSVDNQVQALIYIPISFPKRRDLKLL.

Residues aspartate 317, aspartate 321, and glutamate 469 each contribute to the Mg(2+) site. The DDXXD motif motif lies at 317-321 (DDIFD).

It belongs to the terpene synthase family. Mg(2+) serves as cofactor.

In terms of biological role, probable sesquiterpene synthase. The protein is Probable terpene synthase 11 (TPS11) of Ricinus communis (Castor bean).